A 421-amino-acid chain; its full sequence is Zinc metalloproteinase-disintegrin-like crotastatin (421 aa).

Residues 10 to 206 (KYVKLFLVAD…NMPQCILKKP (197 aa)) form the Peptidase M12B domain. Asn29 carries N-linked (GlcNAc...) asparagine glycosylation. Disulfide bonds link Cys121-Cys201, Cys161-Cys185, and Cys163-Cys168. Zn(2+) is bound at residue His146. Glu147 is an active-site residue. The Zn(2+) site is built by His150 and His156. Positions 214–299 (PAVCGNYFVE…TECTDRFQRN (86 aa)) constitute a Disintegrin domain. Positions 216, 219, 221, 223, 226, and 229 each coordinate Ca(2+). 14 disulfides stabilise this stretch: Cys217–Cys246, Cys228–Cys241, Cys230–Cys236, Cys240–Cys263, Cys254–Cys260, Cys259–Cys285, Cys272–Cys292, Cys279–Cys310, Cys303–Cys315, Cys322–Cys372, Cys337–Cys383, Cys350–Cys360, Cys367–Cys409, and Cys403–Cys414. The D/ECD-tripeptide motif lies at 278–280 (ECD). 5 residues coordinate Ca(2+): Asp280, Met281, Asp283, Asp294, and Arg295.

The protein belongs to the venom metalloproteinase (M12B) family. P-III subfamily. P-IIIc sub-subfamily. As to quaternary structure, homodimer; disulfide-linked. It depends on Zn(2+) as a cofactor. In terms of tissue distribution, expressed by the venom gland.

It localises to the secreted. Its function is as follows. Snake venom zinc metalloprotease that induces apoptosis in vascular endothelial cells (VEC), without degrading the extracellular matrix (it cannot cleave collagen) or inhibiting adhesion of VEC. Has also fibrinogenolytic and hemorrhagic activities. This chain is Zinc metalloproteinase-disintegrin-like crotastatin, found in Crotalus durissus terrificus (South American rattlesnake).